Reading from the N-terminus, the 530-residue chain is MAISLGNAFIKNFLGKAPDWYKITIISFLIINPFVFFLVDPFVAGWLLVVEFIFTLAMALKCYPLQPGGLLAIEAVAIGMTSPAQVKHELVANIEVLLLLIFMVAGIYFMKQLLLYIFTKILIGIRSKVLLSLSFCLMAAFLSAFLDALTVIAVVISVTVGFYSIYHKVASGQDPSTSHDHTTDTHVREVSRDDLENYRSFLRSLLMHAGIGTALGGVMTMVGEPQNLIIADQAGWLFGEFIIRMSPVTVPVFMCGLLTCTLVEKFQICGYGTLLPENVRRILVDYDDEERKNRTNIDYAKLTAQALIAVWLIVGLAMHLAAVGLIGLTVIIFATSFTGVTEEHALGKAFEEALPFTALLAVFFSIVAVIIDQHLFTPIISWVLTLNGNAQMTMFYIANGLLSMVSDNVFVGTVYINEVKAALVNGVITRDQFDMLAVAINTGTNLPSVATPNGQAAFLFVLTSALAPLIRLSYGRMVYMALPYTIVLALVGLAGIEFMLLPMTEWFYDMGWLVHNTSEVMSTIAPAAGH.

The next 13 membrane-spanning stretches (helical) occupy residues 13-33, 34-54, 64-84, 90-110, 113-133, 136-156, 205-225, 234-254, 306-326, 351-371, 378-400, 450-470, and 481-501; these read FLGKAPDWYKITIISFLIINP, FVFFLVDPFVAGWLLVVEFIF, PLQPGGLLAIEAVAIGMTSPA, LVANIEVLLLLIFMVAGIYFM, LLLYIFTKILIGIRSKVLLSL, CLMAAFLSAFLDALTVIAVVI, LLMHAGIGTALGGVMTMVGEP, AGWLFGEFIIRMSPVTVPVFM, ALIAVWLIVGLAMHLAAVGLI, EEALPFTALLAVFFSIVAVII, PIISWVLTLNGNAQMTMFYIANG, ATPNGQAAFLFVLTSALAPLI, and ALPYTIVLALVGLAGIEFMLL.

This sequence belongs to the NhaB Na(+)/H(+) (TC 2.A.34) antiporter family.

The protein resides in the cell inner membrane. It carries out the reaction 2 Na(+)(in) + 3 H(+)(out) = 2 Na(+)(out) + 3 H(+)(in). In terms of biological role, na(+)/H(+) antiporter that extrudes sodium in exchange for external protons. The protein is Na(+)/H(+) antiporter NhaB of Photobacterium profundum (strain SS9).